A 575-amino-acid chain; its full sequence is Mitochondrial 2-methylisocitrate lyase ICL2 (575 aa).

Residue Cys-238 is part of the active site.

Belongs to the isocitrate lyase/PEP mutase superfamily. Isocitrate lyase family.

The protein localises to the mitochondrion matrix. The enzyme catalyses (2S,3R)-3-hydroxybutane-1,2,3-tricarboxylate = pyruvate + succinate. It functions in the pathway organic acid metabolism; propanoate degradation. Functionally, catalyzes the formation of pyruvate and succinate from 2-methylisocitrate during the metabolism of endogenous propionyl-CoA. Does not act on isocitrate. The chain is Mitochondrial 2-methylisocitrate lyase ICL2 (ICL2) from Saccharomyces cerevisiae (strain ATCC 204508 / S288c) (Baker's yeast).